An 850-amino-acid chain; its full sequence is RPA-related protein RADX (850 aa).

The tract at residues Met1–Gly31 is disordered. Residues Trp228 to Asn331 constitute a DNA-binding region (OB). 2 disordered regions span residues Glu575–Gln612 and Gly632–Arg671. Positions Gly590 to Pro608 are enriched in basic and acidic residues. A compositionally biased stretch (polar residues) spans Pro643–Gly668.

It localises to the chromosome. In terms of biological role, single-stranded DNA-binding protein recruited to replication forks to maintain genome stability. Prevents fork collapse by antagonizing the accumulation of RAD51 at forks to ensure the proper balance of fork remodeling and protection without interfering with the capacity of cells to complete homologous recombination of double-strand breaks. The polypeptide is RPA-related protein RADX (Mus musculus (Mouse)).